Consider the following 61-residue polypeptide: Protein DDR2 (61 aa).

Residues 1-22 form the signal peptide; that stretch reads MKVSQVFISAISVFGLATSVNA. Residues asparagine 24 and asparagine 27 are each glycosylated (N-linked (GlcNAc...) asparagine).

This sequence to yeast HOR7.

May play an important role in the response of cells to diverse environmental stresses. This chain is Protein DDR2 (DDR2), found in Saccharomyces cerevisiae (strain ATCC 204508 / S288c) (Baker's yeast).